Here is a 198-residue protein sequence, read N- to C-terminus: Ribonuclease HII (198 aa).

One can recognise an RNase H type-2 domain in the interval 10–198 (QLVAGVDEVG…PVKRALGLAS (189 aa)). A divalent metal cation is bound by residues Asp16, Glu17, and Asp108.

The protein belongs to the RNase HII family. Requires Mn(2+) as cofactor. It depends on Mg(2+) as a cofactor.

It localises to the cytoplasm. The catalysed reaction is Endonucleolytic cleavage to 5'-phosphomonoester.. Endonuclease that specifically degrades the RNA of RNA-DNA hybrids. This Shigella sonnei (strain Ss046) protein is Ribonuclease HII.